The primary structure comprises 1012 residues: Vacuolar protein-sorting protein bro-1 (1012 aa).

Residues 5-407 form the BRO1 domain; the sequence is PMISVPLKAT…ERVETANSEM (403 aa). The stretch at 301-330 forms a coiled coil; sequence ILADATKRHLATVKEKLEELNKENDMIYHQ. The tract at residues 558 to 578 is disordered; sequence RKSRKSNPNSPATVEPNLLEA. Residues 719–775 are a coiled coil; sequence LQSAKNWYKDMRQEAESLEKNVEAFVNNRRAEGAQLLNQIEQDRAANKSSHAALEQE. Disordered regions lie at residues 784-812 and 827-1012; these read MSMD…SFAP and NFST…SAWK. Positions 827–842 are enriched in polar residues; it reads NFSTQYPASPPATQVP. Low complexity predominate over residues 844 to 857; that stretch reads NPGGQQQTPYQQYN. Residues 892 to 913 show a composition bias toward polar residues; that stretch reads QTSFAQSRPYSLTTYGNPSALN. The span at 914–930 shows a compositional bias: low complexity; the sequence is PQGGQPQQSQPGGYVPP. Positions 931–945 are enriched in pro residues; sequence GFVPPPPPPGPPPLG. Gly residues predominate over residues 970–985; sequence PGSGQQGPQGQQGGWG.

This sequence belongs to the BRO1 family.

It is found in the cytoplasm. It localises to the endosome. Involved in concentration and sorting of cargo proteins of the multivesicular body (MVB) for incorporation into intralumenal vesicles. In Neurospora crassa (strain ATCC 24698 / 74-OR23-1A / CBS 708.71 / DSM 1257 / FGSC 987), this protein is Vacuolar protein-sorting protein bro-1 (bro-1).